The primary structure comprises 997 residues: Phosphoenolpyruvate carboxylase (997 aa).

The interval 1–67 (MKSSGSARTA…KPAARTREDK (67 aa)) is disordered. Active-site residues include His207 and Lys649.

It belongs to the PEPCase type 1 family. It depends on Mg(2+) as a cofactor.

It catalyses the reaction oxaloacetate + phosphate = phosphoenolpyruvate + hydrogencarbonate. In terms of biological role, forms oxaloacetate, a four-carbon dicarboxylic acid source for the tricarboxylic acid cycle. This is Phosphoenolpyruvate carboxylase from Burkholderia vietnamiensis (strain G4 / LMG 22486) (Burkholderia cepacia (strain R1808)).